The following is a 455-amino-acid chain: tRNA modification GTPase MnmE (455 aa).

(6S)-5-formyl-5,6,7,8-tetrahydrofolate contacts are provided by Arg-22, Glu-85, and Arg-124. The region spanning 220-377 (GIYTVIVGRP…VEKAIKEAIL (158 aa)) is the TrmE-type G domain. A K(+)-binding site is contributed by Asn-230. GTP contacts are provided by residues 230–235 (NVGKSS), 249–255 (TDIPGTT), and 274–277 (DTAG). Ser-234 is a binding site for Mg(2+). Residues Thr-249, Ile-251, and Thr-254 each contribute to the K(+) site. Residue Thr-255 coordinates Mg(2+). (6S)-5-formyl-5,6,7,8-tetrahydrofolate is bound at residue Lys-455.

It belongs to the TRAFAC class TrmE-Era-EngA-EngB-Septin-like GTPase superfamily. TrmE GTPase family. As to quaternary structure, homodimer. Heterotetramer of two MnmE and two MnmG subunits. K(+) serves as cofactor.

It is found in the cytoplasm. In terms of biological role, exhibits a very high intrinsic GTPase hydrolysis rate. Involved in the addition of a carboxymethylaminomethyl (cmnm) group at the wobble position (U34) of certain tRNAs, forming tRNA-cmnm(5)s(2)U34. This is tRNA modification GTPase MnmE from Caldicellulosiruptor saccharolyticus (strain ATCC 43494 / DSM 8903 / Tp8T 6331).